Reading from the N-terminus, the 204-residue chain is Holliday junction branch migration complex subunit RuvA (204 aa).

Residues 1-64 (MIGRLQGILL…EDAHLLFGFS (64 aa)) form a domain I region. The segment at 65–143 (AKTDRTLFRE…GIKQPDFFVE (79 aa)) is domain II. Residues 144-155 (SSHVGAVDPVTT) are flexible linker. The segment at 156–204 (SPEVPAEEAVAALMALGYKASDAEKMVKRIAKPHLTSEQLIREALKAAL) is domain III.

The protein belongs to the RuvA family. Homotetramer. Forms an RuvA(8)-RuvB(12)-Holliday junction (HJ) complex. HJ DNA is sandwiched between 2 RuvA tetramers; dsDNA enters through RuvA and exits via RuvB. An RuvB hexamer assembles on each DNA strand where it exits the tetramer. Each RuvB hexamer is contacted by two RuvA subunits (via domain III) on 2 adjacent RuvB subunits; this complex drives branch migration. In the full resolvosome a probable DNA-RuvA(4)-RuvB(12)-RuvC(2) complex forms which resolves the HJ.

Its subcellular location is the cytoplasm. Functionally, the RuvA-RuvB-RuvC complex processes Holliday junction (HJ) DNA during genetic recombination and DNA repair, while the RuvA-RuvB complex plays an important role in the rescue of blocked DNA replication forks via replication fork reversal (RFR). RuvA specifically binds to HJ cruciform DNA, conferring on it an open structure. The RuvB hexamer acts as an ATP-dependent pump, pulling dsDNA into and through the RuvAB complex. HJ branch migration allows RuvC to scan DNA until it finds its consensus sequence, where it cleaves and resolves the cruciform DNA. In Mannheimia succiniciproducens (strain KCTC 0769BP / MBEL55E), this protein is Holliday junction branch migration complex subunit RuvA.